We begin with the raw amino-acid sequence, 314 residues long: MGGKSANKAGYFDKLKGLLEEYKSIFIVSVDNVSSQQMHEIRQALRDQGVVLMGKNTMVRRALKTFLVDSPEYERLLPFVKGNVGFVFTNGDLKEIRDKILANKVAAPARAGAVAPVDVWIPAGNTGMEPGKTSFFQALGVPTKIARGTIEITTDLKLVEAGAKVGPSEATLLNMLNISPFTYGMGIAQVYDQGNTFPSSVLDISEEQLLKAFSSAITTIAAVSLALNFPTLPSVIHSLVNSYKKVLAVAIETEISWPEIEELKDRIANPEAYAAAAPVAAADSGAAAGGAAAEEEKEEEEESDEEGGFGDLFG.

The disordered stretch occupies residues 285–314 (GAAAGGAAAEEEKEEEEESDEEGGFGDLFG). The segment covering 293-308 (AEEEKEEEEESDEEGG) has biased composition (acidic residues). At Ser-303 the chain carries Phosphoserine; by CK1.

It belongs to the universal ribosomal protein uL10 family. As to quaternary structure, component of the large ribosomal subunit. P0 forms a pentameric complex by interaction with dimers of P1 and P2. Phosphorylated.

Its function is as follows. Ribosomal protein P0 is the functional equivalent of E.coli protein L10. The protein is Large ribosomal subunit protein uL10 of Podospora anserina (Pleurage anserina).